The sequence spans 119 residues: MSITHLMRQQVEELFKRFLEKTGLSEEATVYAVFIPKEEEVDEESVDVFEQRVNPKDAESVENFVSRLTKVALENDVKELKLYALVLDRDGETLIIAREENPEADEVIKELIERMKEEV.

This is an uncharacterized protein from Aquifex aeolicus (strain VF5).